We begin with the raw amino-acid sequence, 957 residues long: Glycine dehydrogenase (decarboxylating) (957 aa).

Lys-704 carries the post-translational modification N6-(pyridoxal phosphate)lysine.

Belongs to the GcvP family. In terms of assembly, the glycine cleavage system is composed of four proteins: P, T, L and H. The cofactor is pyridoxal 5'-phosphate.

It carries out the reaction N(6)-[(R)-lipoyl]-L-lysyl-[glycine-cleavage complex H protein] + glycine + H(+) = N(6)-[(R)-S(8)-aminomethyldihydrolipoyl]-L-lysyl-[glycine-cleavage complex H protein] + CO2. Its function is as follows. The glycine cleavage system catalyzes the degradation of glycine. The P protein binds the alpha-amino group of glycine through its pyridoxal phosphate cofactor; CO(2) is released and the remaining methylamine moiety is then transferred to the lipoamide cofactor of the H protein. This chain is Glycine dehydrogenase (decarboxylating), found in Bordetella petrii (strain ATCC BAA-461 / DSM 12804 / CCUG 43448).